The primary structure comprises 702 residues: Phosphoglycerol transferase I (702 aa).

3 helical membrane-spanning segments follow: residues Leu5–Trp24, Gly73–Arg95, and Gly102–Tyr124.

The protein belongs to the OpgB family.

It is found in the cell inner membrane. The catalysed reaction is a phosphatidylglycerol + a membrane-derived-oligosaccharide D-glucose = a 1,2-diacyl-sn-glycerol + a membrane-derived-oligosaccharide 6-(glycerophospho)-D-glucose.. The protein operates within glycan metabolism; osmoregulated periplasmic glucan (OPG) biosynthesis. Transfers a phosphoglycerol residue from phosphatidylglycerol to the membrane-bound nascent glucan backbones. This chain is Phosphoglycerol transferase I, found in Xanthomonas axonopodis pv. citri (strain 306).